We begin with the raw amino-acid sequence, 353 residues long: N6-methyladenosine RNA demethylase ALKB1 (353 aa).

Positions 223–352 (IAQAAIVNFY…RINLNVRQMR (130 aa)) constitute a Fe2OG dioxygenase domain. Positions 241, 243, and 308 each coordinate Fe cation. Arginine 343 serves as a coordination point for 2-oxoglutarate.

This sequence belongs to the alkB family. The cofactor is Fe(2+).

The protein resides in the cytoplasm. Its subcellular location is the P-body. It catalyses the reaction an N(6)-methyladenosine in mRNA + 2-oxoglutarate + O2 = an adenosine in mRNA + formaldehyde + succinate + CO2. Its function is as follows. RNA demethylase that regulates the stability of mRNAs through an m(6)A-dependent manner. M6A is a modification present at internal sites of mRNAs and some non-coding RNAs and plays a role in mRNA stability and processing. Plays a role in pathogenicity towards plant host. The chain is N6-methyladenosine RNA demethylase ALKB1 from Pyricularia oryzae (strain 70-15 / ATCC MYA-4617 / FGSC 8958) (Rice blast fungus).